Consider the following 520-residue polypeptide: Maturase K (520 aa).

The protein belongs to the intron maturase 2 family. MatK subfamily.

It localises to the plastid. Its subcellular location is the chloroplast. Its function is as follows. Usually encoded in the trnK tRNA gene intron. Probably assists in splicing its own and other chloroplast group II introns. The chain is Maturase K from Liriope muscari (Big blue lilyturf).